A 168-amino-acid polypeptide reads, in one-letter code: Ribosome maturation factor RimP (168 aa).

Belongs to the RimP family.

The protein resides in the cytoplasm. Required for maturation of 30S ribosomal subunits. This is Ribosome maturation factor RimP from Syntrophobacter fumaroxidans (strain DSM 10017 / MPOB).